Consider the following 445-residue polypeptide: Chromosome partition protein MukF (445 aa).

Residues 213–241 (LSETSNTLKELQDTLQAAGDELQTQILDI) form a leucine-zipper region.

The protein belongs to the MukF family. As to quaternary structure, interacts, and probably forms a ternary complex, with MukE and MukB via its C-terminal region. The complex formation is stimulated by calcium or magnesium. It is required for an interaction between MukE and MukB.

It localises to the cytoplasm. Its subcellular location is the nucleoid. Functionally, involved in chromosome condensation, segregation and cell cycle progression. May participate in facilitating chromosome segregation by condensation DNA from both sides of a centrally located replisome during cell division. Not required for mini-F plasmid partitioning. Probably acts via its interaction with MukB and MukE. Overexpression results in anucleate cells. It has a calcium binding activity. The polypeptide is Chromosome partition protein MukF (Vibrio vulnificus (strain YJ016)).